We begin with the raw amino-acid sequence, 320 residues long: Malate dehydrogenase (320 aa).

NAD(+) contacts are provided by residues 10–15 (GSGMIG) and aspartate 34. Substrate-binding residues include arginine 83 and arginine 89. NAD(+) is bound by residues asparagine 96 and 119–121 (ITN). 2 residues coordinate substrate: asparagine 121 and arginine 152. Histidine 176 acts as the Proton acceptor in catalysis.

This sequence belongs to the LDH/MDH superfamily. MDH type 3 family.

The catalysed reaction is (S)-malate + NAD(+) = oxaloacetate + NADH + H(+). Catalyzes the reversible oxidation of malate to oxaloacetate. The chain is Malate dehydrogenase from Hyphomonas neptunium (strain ATCC 15444).